The sequence spans 462 residues: Jasmonoyl--L-amino acid synthetase GH3.3 (462 aa).

S103 lines the ATP pocket. Residue S106 coordinates jasmonate. Residues T126, N172, and 337–342 (GASEGW) contribute to the ATP site. Residue 170–174 (TTNVY) coordinates an L-alpha-amino acid. Jasmonate contacts are provided by residues 334-337 (AEYG) and S339.

The protein belongs to the IAA-amido conjugating enzyme family. Expressed in green shoots and flowers.

It catalyses the reaction a jasmonate + an L-alpha-amino acid + ATP = a jasmonyl-L-amino acid + AMP + diphosphate + H(+). Catalyzes the synthesis of jasmonate-amino acid conjugates by adenylation. Catalyzes the conjugation of jasmonate (JA) to Ile when expressed in a heterologous system (E.coli). Catalyzes in vitro the conjugation of jasmonate (JA) to Ile, Phe, Leu, Met, Val and Trp. May catalyze the synthesis of indole-3-acetic acid (IAA)-amino acid conjugates, providing a mechanism for the plant to cope with the presence of excess auxin. The sequence is that of Jasmonoyl--L-amino acid synthetase GH3.3 from Oryza sativa subsp. japonica (Rice).